The sequence spans 634 residues: 1-deoxy-D-xylulose-5-phosphate synthase (634 aa).

Residues His73 and 114-116 each bind thiamine diphosphate; that span reads GHS. Residue Asp145 coordinates Mg(2+). Residues 146–147, Asn174, Tyr285, and Glu365 each bind thiamine diphosphate; that span reads GA. Asn174 lines the Mg(2+) pocket.

This sequence belongs to the transketolase family. DXPS subfamily. As to quaternary structure, homodimer. Mg(2+) serves as cofactor. Thiamine diphosphate is required as a cofactor.

It catalyses the reaction D-glyceraldehyde 3-phosphate + pyruvate + H(+) = 1-deoxy-D-xylulose 5-phosphate + CO2. The protein operates within metabolic intermediate biosynthesis; 1-deoxy-D-xylulose 5-phosphate biosynthesis; 1-deoxy-D-xylulose 5-phosphate from D-glyceraldehyde 3-phosphate and pyruvate: step 1/1. In terms of biological role, catalyzes the acyloin condensation reaction between C atoms 2 and 3 of pyruvate and glyceraldehyde 3-phosphate to yield 1-deoxy-D-xylulose-5-phosphate (DXP). This Desulforudis audaxviator (strain MP104C) protein is 1-deoxy-D-xylulose-5-phosphate synthase.